Here is an 86-residue protein sequence, read N- to C-terminus: Acyl-CoA-binding protein homolog (86 aa).

The region spanning 2-86 (VSEQFNAAAE…FVEGLVAKYA (85 aa)) is the ACB domain. Residues K14, 29–33 (YALFK), K51, K55, and Y74 contribute to the an acyl-CoA site.

Belongs to the ACBP family. Expressed in larval and pupal brains. In adults, expressed in cardia, part of the Malpighian tubules, fat body, and gametes of both sexes.

Functionally, binds medium- and long-chain acyl-CoA esters with very high affinity and may function as an intracellular carrier of acyl-CoA esters. May be involved in energy metabolism in a manner that depends on the substrate used for energy production. Dbi and its metabolites are involved in the regulation of multiple biological processes. The polypeptide is Acyl-CoA-binding protein homolog (Drosophila melanogaster (Fruit fly)).